The sequence spans 258 residues: Pimeloyl-[acyl-carrier protein] methyl ester esterase (258 aa).

Residues 16 to 241 (LVLLHGWGLN…GSAHAPFVSH (226 aa)) enclose the AB hydrolase-1 domain. Substrate contacts are provided by residues tryptophan 22, 82–83 (SM), and 143–147 (FLALQ). The active-site Nucleophile is serine 82. Active-site residues include aspartate 207 and histidine 235. Residue histidine 235 coordinates substrate.

Belongs to the AB hydrolase superfamily. Carboxylesterase BioH family. As to quaternary structure, monomer.

It is found in the cytoplasm. It carries out the reaction 6-carboxyhexanoyl-[ACP] methyl ester + H2O = 6-carboxyhexanoyl-[ACP] + methanol + H(+). Its pathway is cofactor biosynthesis; biotin biosynthesis. Functionally, the physiological role of BioH is to remove the methyl group introduced by BioC when the pimeloyl moiety is complete. It allows to synthesize pimeloyl-ACP via the fatty acid synthetic pathway through the hydrolysis of the ester bonds of pimeloyl-ACP esters. This is Pimeloyl-[acyl-carrier protein] methyl ester esterase from Yersinia enterocolitica serotype O:8 / biotype 1B (strain NCTC 13174 / 8081).